A 1251-amino-acid polypeptide reads, in one-letter code: Topoisomerase 1-associated factor 1 (1251 aa).

Disordered regions lie at residues 328–354 (ERKM…KDLG), 564–601 (RRKK…KTSQ), 901–1021 (RRKT…YEGN), and 1041–1251 (ATFG…SDEE). The span at 344–354 (RKEDMEPKDLG) shows a compositional bias: basic and acidic residues. The span at 576-591 (QGDDEGQGDAEDDSAD) shows a compositional bias: acidic residues. Composition is skewed to basic and acidic residues over residues 592–601 (DERQAEKTSQ) and 985–1011 (AEAR…YVDP). Acidic residues-rich tracts occupy residues 1069-1079 (DGDDGEGEDAV) and 1103-1122 (GGED…EEDG). Low complexity predominate over residues 1123 to 1136 (SAVSEAEAPAAAGR). Positions 1137–1151 (RPNKRRKPAQKKKKR) are enriched in basic residues. Residues 1157–1179 (SGEDDDVGMDMDVDVDADADADA) show a composition bias toward acidic residues. Positions 1182-1205 (FTQSSKDGAVTNDTPLSSDPSRTT) are enriched in polar residues.

This sequence belongs to the timeless family. Component of the fork protection complex (FPC) consisting of TOF1 and CSM3.

The protein localises to the nucleus. In terms of biological role, forms a fork protection complex (FPC) with CSM3 and which is required for chromosome segregation during meiosis and DNA damage repair. FPC coordinates leading and lagging strand synthesis and moves with the replication fork. FPC stabilizes replication forks in a configuration that is recognized by replication checkpoint sensors. This chain is Topoisomerase 1-associated factor 1 (TOF1), found in Chaetomium globosum (strain ATCC 6205 / CBS 148.51 / DSM 1962 / NBRC 6347 / NRRL 1970) (Soil fungus).